A 571-amino-acid polypeptide reads, in one-letter code: Isthmin-2 (571 aa).

A signal peptide spans 1–26 (MRALRDRAGLLLCVLLLAALLEAALG). Disordered regions lie at residues 30–60 (KKPR…LKEE), 116–141 (ANTT…LREE), and 257–294 (EKDR…DEEE). Positions 116 to 131 (ANTTLSTPNPDTQASA) are enriched in polar residues. An N-linked (GlcNAc...) asparagine glycan is attached at Asn117. A compositionally biased stretch (basic and acidic residues) spans 257-268 (EKDRAPGEKGEE). The span at 269–294 (KEEDEDYPSEDIEGEDQEDKEEDEEE) shows a compositional bias: acidic residues. Residue Asn300 is glycosylated (N-linked (GlcNAc...) asparagine). The TSP type-1 domain occupies 327–371 (EPQKEWSPWSPCSGNCSTGKQQRTRPCGYGCTATETRTCDLPSCP). 3 disulfides stabilise this stretch: Cys338–Cys365, Cys342–Cys370, and Cys353–Cys357. Asn392 carries an N-linked (GlcNAc...) asparagine glycan. Residues 396 to 559 (MHDQDVDSCE…RACTDNPLEE (164 aa)) form the AMOP domain.

It belongs to the isthmin family. As to expression, expressed at high levels in the placenta and at moderate levels in the pancreas, kidney, heart, liver, lung, brain and skeletal muscle.

Its subcellular location is the secreted. The protein is Isthmin-2 (ISM2) of Homo sapiens (Human).